The following is a 149-amino-acid chain: 3-dehydroquinate dehydratase (149 aa).

Tyrosine 24 (proton acceptor) is an active-site residue. Positions 76, 82, and 89 each coordinate substrate. Residue histidine 102 is the Proton donor of the active site. Residues 103 to 104 and arginine 113 each bind substrate; that span reads LS.

Belongs to the type-II 3-dehydroquinase family. Homododecamer.

It carries out the reaction 3-dehydroquinate = 3-dehydroshikimate + H2O. The protein operates within metabolic intermediate biosynthesis; chorismate biosynthesis; chorismate from D-erythrose 4-phosphate and phosphoenolpyruvate: step 3/7. In terms of biological role, catalyzes a trans-dehydration via an enolate intermediate. This chain is 3-dehydroquinate dehydratase, found in Acinetobacter baylyi (strain ATCC 33305 / BD413 / ADP1).